Here is a 565-residue protein sequence, read N- to C-terminus: Adenine deaminase (565 aa).

Belongs to the metallo-dependent hydrolases superfamily. Adenine deaminase family. Mn(2+) is required as a cofactor.

The enzyme catalyses adenine + H2O + H(+) = hypoxanthine + NH4(+). The chain is Adenine deaminase from Cereibacter sphaeroides (strain ATCC 17025 / ATH 2.4.3) (Rhodobacter sphaeroides).